Reading from the N-terminus, the 603-residue chain is MAKTVVSPDTIALPRTSESEQLKKIRHTTSHVMAMAVQKLFPKAQVTIGPWTETGFYYDFDVAEPFTEADLKAIKKEMVKIINKKLPVIREEISREEAKQRIESIQEPYKLEILDSIHEPITVYHLGDQWWDLCAGPHLESTADINPKAIALESVAGAYWRGDANKAQLQRIYGTAWETPEQLAEYQRRKEEALKRDHRKLGKELGLFIFADPVGPGLPLWTPKGTIIRTILEDFLKQEQIKRGYLPVVTPHIARVDLFKQSGHWQKYQEDMFPMMAESPEEAAQEMGFVLKPMNCPFHIQIYKSELRSYRDLPLRLAEFGTVYRYEQSGELGGLTRVRGFTVDDSHLFVTPDQLDEEFLSVVDLILTVFKSLQLKNFKARLSFRDPESDKYIGSDEAWEKAQGAIRRAVQELEMDYFEAPGEAAFYGPKLDFIFQDALEREWQLGTVQVDYNLPERFDLEYIAADGSRQRPVMIHRAPFGSLERLIGILIEEYAGDFPLWLAPIQVRLLAVSDEFLPFAQSIVQQMQSLGLRAEVDTSGDRLGKMIRNAEKQKIPVMAVIGAKEVEANALNIRTRASGELGEIPVTEVLEKLQATVTNHDTW.

Residues 197–499 (DHRKLGKELG…LIEEYAGDFP (303 aa)) form a catalytic region. C296, H347, and H476 together coordinate Zn(2+).

This sequence belongs to the class-II aminoacyl-tRNA synthetase family. As to quaternary structure, homodimer. It depends on Zn(2+) as a cofactor.

The protein localises to the cytoplasm. The catalysed reaction is tRNA(Thr) + L-threonine + ATP = L-threonyl-tRNA(Thr) + AMP + diphosphate + H(+). Its function is as follows. Catalyzes the attachment of threonine to tRNA(Thr) in a two-step reaction: L-threonine is first activated by ATP to form Thr-AMP and then transferred to the acceptor end of tRNA(Thr). Also edits incorrectly charged L-seryl-tRNA(Thr). The chain is Threonine--tRNA ligase from Synechocystis sp. (strain ATCC 27184 / PCC 6803 / Kazusa).